The following is a 326-amino-acid chain: MFCFWRTSALAVLLIWGVFVAGSSCTDKNQTTQNNSSSPLTQVNTTVSVQIGTKALLCCFSIPLTKAVLITWIIKLRGLPSCTIAYKVDTKTNETSCLGRNITWASTPDHSPELQISAVTLQHEGTYTCETVTPEGNFEKNYDLQVLVPPEVTYFPEKNRSAVCEAMAGKPAAQISWSPDGDCVTTSESHSNGTVTVRSTCHWEQNNVSDVSCIVSHLTGNQSLSIELSRGGNQSLRPYIPYIIPSIIILIIIGCICLLKISGFRKCKLPKLEATSAIEEDEMQPYASYTEKSNPLYDTVTKVEAFPVSQGEVNGTDCLTLSAIGI.

Residues 1–25 form the signal peptide; sequence MFCFWRTSALAVLLIWGVFVAGSSC. Over 26–238 the chain is Extracellular; sequence TDKNQTTQNN…SRGGNQSLRP (213 aa). Residues Asn-29, Asn-34, Asn-35, Asn-44, Asn-93, Asn-101, Asn-159, Asn-192, Asn-207, Asn-221, and Asn-233 are each glycosylated (N-linked (GlcNAc...) asparagine). Positions 51–136 constitute an Ig-like V-type domain; it reads IGTKALLCCF…YTCETVTPEG (86 aa). Disulfide bonds link Cys-58-Cys-129 and Cys-82-Cys-97. The Ig-like C2-type domain occupies 138-229; sequence FEKNYDLQVL…GNQSLSIELS (92 aa). 2 cysteine pairs are disulfide-bonded: Cys-164/Cys-213 and Cys-183/Cys-201. The chain crosses the membrane as a helical span at residues 239–259; the sequence is YIPYIIPSIIILIIIGCICLL. The Cytoplasmic segment spans residues 260–326; the sequence is KISGFRKCKL…DCLTLSAIGI (67 aa).

Belongs to the CD200R family. In terms of assembly, CD200 and CD200R1 interact via their respective N-terminal Ig-like domains. As to expression, expressed in granulocytes, monocytes, most T-cells and a subset of NK, NKT and B-cells (at protein level). Expressed in the spleen, lung, liver, testis, bone marrow, lymph nodes, spinal cord, kidney, uterus and small intestine. Expressed in mast and dendritic cells. Expressed in the lung of N.brasiliensis-infected mice.

It is found in the cell membrane. Functionally, inhibitory receptor for the CD200/OX2 cell surface glycoprotein. Limits inflammation by inhibiting the expression of pro-inflammatory molecules including TNF-alpha, interferons, and inducible nitric oxide synthase (iNOS) in response to selected stimuli. The chain is Cell surface glycoprotein CD200 receptor 1 (Cd200r1) from Mus musculus (Mouse).